The chain runs to 704 residues: Polyribonucleotide nucleotidyltransferase (704 aa).

The Mg(2+) site is built by D485 and D491. Residues 552 to 611 (PRIYTMKIDPKKIKDVIGKGGATIRALTEETGTSIDIDDDGTVKIAAVDGNAVKTVMARI) enclose the KH domain. In terms of domain architecture, S1 motif spans 621-689 (GAVYTGKVTR…RQGRIRLTMR (69 aa)).

This sequence belongs to the polyribonucleotide nucleotidyltransferase family. Component of the RNA degradosome, which is a multiprotein complex involved in RNA processing and mRNA degradation. The cofactor is Mg(2+).

The protein localises to the cytoplasm. It catalyses the reaction RNA(n+1) + phosphate = RNA(n) + a ribonucleoside 5'-diphosphate. Its function is as follows. Involved in mRNA degradation. Catalyzes the phosphorolysis of single-stranded polyribonucleotides processively in the 3'- to 5'-direction. The sequence is that of Polyribonucleotide nucleotidyltransferase from Mannheimia succiniciproducens (strain KCTC 0769BP / MBEL55E).